Consider the following 1060-residue polypeptide: DNA-directed RNA polymerase subunit beta (1060 aa).

The protein belongs to the RNA polymerase beta chain family. In terms of assembly, in plastids the minimal PEP RNA polymerase catalytic core is composed of four subunits: alpha, beta, beta', and beta''. When a (nuclear-encoded) sigma factor is associated with the core the holoenzyme is formed, which can initiate transcription.

It localises to the plastid. Its subcellular location is the chloroplast. The enzyme catalyses RNA(n) + a ribonucleoside 5'-triphosphate = RNA(n+1) + diphosphate. Its function is as follows. DNA-dependent RNA polymerase catalyzes the transcription of DNA into RNA using the four ribonucleoside triphosphates as substrates. This chain is DNA-directed RNA polymerase subunit beta, found in Lactuca sativa (Garden lettuce).